A 219-amino-acid polypeptide reads, in one-letter code: Histone H1.11R (219 aa).

Low complexity-rich tracts occupy residues 1 to 20 (MAETAPAAAPAAAPAPAAKA) and 28 to 40 (AAGGAKARKPAGP). 2 disordered regions span residues 1 to 42 (MAET…GPSV) and 89 to 219 (LVSK…AKKK). One can recognise an H15 domain in the interval 38-111 (AGPSVTELIT…GASGSFRLSK (74 aa)). 4 stretches are compositionally biased toward basic residues: residues 121-135 (PKKKASAAKPKKAAA), 143-160 (KKPKKAVAVKKSPKKAKK), 168-183 (KSVKSPKKAAKPKKAV), and 192-219 (KAVKPKAAKPKAAKPKAAKAKKAAAKKK).

It belongs to the histone H1/H5 family.

It is found in the nucleus. Its subcellular location is the chromosome. Functionally, histones H1 are necessary for the condensation of nucleosome chains into higher-order structures. The polypeptide is Histone H1.11R (Gallus gallus (Chicken)).